The primary structure comprises 204 residues: Large ribosomal subunit protein uL4 (204 aa).

Positions 42 to 52 (GTKAQKSRSQV) are enriched in polar residues. The segment at 42–70 (GTKAQKSRSQVSGTTKKSKKQKGGGARHG) is disordered.

This sequence belongs to the universal ribosomal protein uL4 family. Part of the 50S ribosomal subunit.

In terms of biological role, one of the primary rRNA binding proteins, this protein initially binds near the 5'-end of the 23S rRNA. It is important during the early stages of 50S assembly. It makes multiple contacts with different domains of the 23S rRNA in the assembled 50S subunit and ribosome. Forms part of the polypeptide exit tunnel. The chain is Large ribosomal subunit protein uL4 from Xylella fastidiosa (strain M12).